A 561-amino-acid chain; its full sequence is MELGAWRSILYIAFLFAITRHAFCKAVNLVHSPEGEEFENILSSVSATVEKKEVNNKLIMPTANRDNQGVREELLVSSFKERKLLNTNSANLRLNSIGSYEMIDFKQINSEFFLSHRQHGFVLFIDSKKKPRQSFYTDSATSIVQLSKKYRNKIKFKSVDCASSLEKCEEIGINSFPSLVYYNNAGQKKVFTAHTPYEVLSKHADLITELDETDGKVYPQSIIRLEEFKNLKANEPVFFLYLHDYGSTPEDFDSLRIFARYLVGFAPLYRTDDEKVIKTLNVTRLPHLVAIRHGVAFSYSERSVSAMRNTFQLIKWASLLKYPLVPELTPAVVENLDSDSYLAIALINPTSQVKASKAISTVQEIGLKWTLKLREVERKQLLTAREKWWDHLRMLKQKGYDDVAFLAAEYSLPLPKNKKVTFVWVNSLQWKTWISHTFHIDPMGPSRFVLMDPSRMFYWDSSAKGLPLTLDDSSLILDTTFRVLAITGEGLPHEFSIPRGYVYLSEIKQYSSLILISLWISLILFVSFLNRRLILHYSFESVHQLKTLTRKFIYSSLLKQD.

The first 24 residues, 1-24 (MELGAWRSILYIAFLFAITRHAFC), serve as a signal peptide directing secretion. Residues 25 to 509 (KAVNLVHSPE…GYVYLSEIKQ (485 aa)) are Lumenal-facing. Residues 510-530 (YSSLILISLWISLILFVSFLN) traverse the membrane as a helical segment. Topologically, residues 531 to 561 (RRLILHYSFESVHQLKTLTRKFIYSSLLKQD) are cytoplasmic.

It is found in the endoplasmic reticulum membrane. The protein resides in the golgi apparatus membrane. This is an uncharacterized protein from Schizosaccharomyces pombe (strain 972 / ATCC 24843) (Fission yeast).